The following is a 376-amino-acid chain: Cytochrome b-c1 complex subunit 2, mitochondrial (376 aa).

A mitochondrion-targeting transit peptide spans 1 to 16; sequence MLSRVSARSYSSAAQS.

Belongs to the peptidase M16 family. UQCRC2/QCR2 subfamily. As to quaternary structure, component of the ubiquinol-cytochrome c oxidoreductase (cytochrome b-c1 complex, complex III, CIII), a multisubunit enzyme composed of 3 respiratory subunits cytochrome b, cytochrome c1 and Rieske protein, 2 core protein subunits, and additional low-molecular weight protein subunits. The complex exists as an obligatory dimer and forms supercomplexes (SCs) in the inner mitochondrial membrane with cytochrome c oxidase (complex IV, CIV).

The protein resides in the mitochondrion inner membrane. In terms of biological role, component of the ubiquinol-cytochrome c oxidoreductase, a multisubunit transmembrane complex that is part of the mitochondrial electron transport chain which drives oxidative phosphorylation. The respiratory chain contains 3 multisubunit complexes succinate dehydrogenase (complex II, CII), ubiquinol-cytochrome c oxidoreductase (cytochrome b-c1 complex, complex III, CIII) and cytochrome c oxidase (complex IV, CIV), that cooperate to transfer electrons derived from NADH and succinate to molecular oxygen, creating an electrochemical gradient over the inner membrane that drives transmembrane transport and the ATP synthase. The cytochrome b-c1 complex catalyzes electron transfer from ubiquinol to cytochrome c, linking this redox reaction to translocation of protons across the mitochondrial inner membrane, with protons being carried across the membrane as hydrogens on the quinol. In the process called Q cycle, 2 protons are consumed from the matrix, 4 protons are released into the intermembrane space and 2 electrons are passed to cytochrome c. The chain is Cytochrome b-c1 complex subunit 2, mitochondrial (QCR2) from Debaryomyces hansenii (strain ATCC 36239 / CBS 767 / BCRC 21394 / JCM 1990 / NBRC 0083 / IGC 2968) (Yeast).